Reading from the N-terminus, the 502-residue chain is Cytochrome P450 81D1 (502 aa).

Residues 6–26 (IRVVLYSIFSLIFLIISFKFL) traverse the membrane as a helical segment. Position 440 (cysteine 440) interacts with heme.

The protein belongs to the cytochrome P450 family. Requires heme as cofactor.

It is found in the membrane. This chain is Cytochrome P450 81D1 (CYP81D1), found in Arabidopsis thaliana (Mouse-ear cress).